A 182-amino-acid polypeptide reads, in one-letter code: Probable RNA 2'-phosphotransferase (182 aa).

Belongs to the KptA/TPT1 family.

In terms of biological role, removes the 2'-phosphate from RNA via an intermediate in which the phosphate is ADP-ribosylated by NAD followed by a presumed transesterification to release the RNA and generate ADP-ribose 1''-2''-cyclic phosphate (APPR&gt;P). May function as an ADP-ribosylase. In Pseudomonas paraeruginosa (strain DSM 24068 / PA7) (Pseudomonas aeruginosa (strain PA7)), this protein is Probable RNA 2'-phosphotransferase.